We begin with the raw amino-acid sequence, 313 residues long: D-alanine--D-alanine ligase (313 aa).

Positions 108–308 (KLVWQQLGIP…YQELVVGVLA (201 aa)) constitute an ATP-grasp domain. Residue 138 to 193 (VAKLGLPLFVKPASEGSSVAVIKVKSADALPAALIEAVKYDKIVVVEKSVEGGGEY) participates in ATP binding. Residues D262, E275, and N277 each coordinate Mg(2+).

Belongs to the D-alanine--D-alanine ligase family. Requires Mg(2+) as cofactor. The cofactor is Mn(2+).

The protein localises to the cytoplasm. The catalysed reaction is 2 D-alanine + ATP = D-alanyl-D-alanine + ADP + phosphate + H(+). The protein operates within cell wall biogenesis; peptidoglycan biosynthesis. Its function is as follows. Cell wall formation. The polypeptide is D-alanine--D-alanine ligase (Paraburkholderia phytofirmans (strain DSM 17436 / LMG 22146 / PsJN) (Burkholderia phytofirmans)).